The chain runs to 333 residues: Phosphate acyltransferase (333 aa).

Belongs to the PlsX family. As to quaternary structure, homodimer. Probably interacts with PlsY.

The protein resides in the cytoplasm. It carries out the reaction a fatty acyl-[ACP] + phosphate = an acyl phosphate + holo-[ACP]. It functions in the pathway lipid metabolism; phospholipid metabolism. Its function is as follows. Catalyzes the reversible formation of acyl-phosphate (acyl-PO(4)) from acyl-[acyl-carrier-protein] (acyl-ACP). This enzyme utilizes acyl-ACP as fatty acyl donor, but not acyl-CoA. The polypeptide is Phosphate acyltransferase (Pelagibacter ubique (strain HTCC1062)).